Reading from the N-terminus, the 405-residue chain is Cytoplasmic polyadenylated homeobox-like protein (405 aa).

2 disordered regions span residues M1–H33 and P340–G363. Residues E13–T23 are compositionally biased toward basic and acidic residues. The span at K24–H33 shows a compositional bias: basic residues. The homeobox DNA-binding region spans K28 to E87. Over residues Q346–Q360 the composition is skewed to low complexity.

The protein resides in the nucleus. Its function is as follows. Transcription factor that acts as activator. The protein is Cytoplasmic polyadenylated homeobox-like protein of Homo sapiens (Human).